Here is a 325-residue protein sequence, read N- to C-terminus: DNA-directed RNA polymerase subunit alpha (325 aa).

The segment at Met-1–Glu-238 is alpha N-terminal domain (alpha-NTD). The alpha C-terminal domain (alpha-CTD) stretch occupies residues Leu-255 to Phe-325.

It belongs to the RNA polymerase alpha chain family. In terms of assembly, homodimer. The RNAP catalytic core consists of 2 alpha, 1 beta, 1 beta' and 1 omega subunit. When a sigma factor is associated with the core the holoenzyme is formed, which can initiate transcription.

The enzyme catalyses RNA(n) + a ribonucleoside 5'-triphosphate = RNA(n+1) + diphosphate. Functionally, DNA-dependent RNA polymerase catalyzes the transcription of DNA into RNA using the four ribonucleoside triphosphates as substrates. This is DNA-directed RNA polymerase subunit alpha from Leptospira interrogans serogroup Icterohaemorrhagiae serovar copenhageni (strain Fiocruz L1-130).